The primary structure comprises 458 residues: UPF0210 protein Mevan_0738 (458 aa).

It belongs to the UPF0210 family.

This is UPF0210 protein Mevan_0738 from Methanococcus vannielii (strain ATCC 35089 / DSM 1224 / JCM 13029 / OCM 148 / SB).